We begin with the raw amino-acid sequence, 593 residues long: Methylenetetrahydrofolate reductase (NADH) 1 (593 aa).

Catalysis depends on E21, which acts as the Proton donor/acceptor. NAD(+) contacts are provided by residues 21 to 26 and 52 to 53; these read EYFPPK and TW. FAD-binding positions include 52 to 53, H81, 111 to 113, Y153, 157 to 160, D175, and K182; these read TW, RGD, and HPDA. A substrate-binding site is contributed by D113. Positions 193 and 285 each coordinate substrate.

This sequence belongs to the methylenetetrahydrofolate reductase family. Homodimer. It depends on FAD as a cofactor.

The enzyme catalyses (6S)-5-methyl-5,6,7,8-tetrahydrofolate + NAD(+) = (6R)-5,10-methylene-5,6,7,8-tetrahydrofolate + NADH + H(+). It functions in the pathway one-carbon metabolism; tetrahydrofolate interconversion. Plant MTHFRs strongly prefer NADH over NADPH. Not inhibited by methionine or S-adenosylmethionine. In terms of biological role, the probable reversibility of the MTHFR reaction in plants suggests that they can metabolize the methyl group of 5,10-methylenetetrahydrofolate to serine, sugars and starch. This Zea mays (Maize) protein is Methylenetetrahydrofolate reductase (NADH) 1.